We begin with the raw amino-acid sequence, 303 residues long: Phosphoribosylaminoimidazole-succinocarboxamide synthase (303 aa).

Belongs to the SAICAR synthetase family.

It carries out the reaction 5-amino-1-(5-phospho-D-ribosyl)imidazole-4-carboxylate + L-aspartate + ATP = (2S)-2-[5-amino-1-(5-phospho-beta-D-ribosyl)imidazole-4-carboxamido]succinate + ADP + phosphate + 2 H(+). Its pathway is purine metabolism; IMP biosynthesis via de novo pathway; 5-amino-1-(5-phospho-D-ribosyl)imidazole-4-carboxamide from 5-amino-1-(5-phospho-D-ribosyl)imidazole-4-carboxylate: step 1/2. The chain is Phosphoribosylaminoimidazole-succinocarboxamide synthase (ADE1) from Pichia angusta (Yeast).